The sequence spans 236 residues: Eukaryotic translation initiation factor 3 subunit J (236 aa).

Disordered regions lie at residues 1-88 (MADD…LANM) and 188-236 (SEKQ…DDFM). Residues 28-46 (GEDDDEDVKESWEDEEEKK) are compositionally biased toward acidic residues. Composition is skewed to basic and acidic residues over residues 47–58 (DEEKPTKTEAPV), 68–88 (AKLEEQERLNEEEERKRLANM), and 188–197 (SEKQKMEKAN). 2 coiled-coil regions span residues 61–112 (KPNK…LKSA) and 174–209 (ADIKKVKMSVESLHSEKQKMEKANAKKSAAKAKGKV). The span at 201–210 (SAAKAKGKVS) shows a compositional bias: basic residues.

Belongs to the eIF-3 subunit J family. In terms of assembly, component of the eukaryotic translation initiation factor 3 (eIF-3) complex. The eIF-3 complex interacts with pix.

It localises to the cytoplasm. Functionally, component of the eukaryotic translation initiation factor 3 (eIF-3) complex, which is involved in protein synthesis of a specialized repertoire of mRNAs and, together with other initiation factors, stimulates binding of mRNA and methionyl-tRNAi to the 40S ribosome. The eIF-3 complex specifically targets and initiates translation of a subset of mRNAs involved in cell proliferation. This is Eukaryotic translation initiation factor 3 subunit J from Drosophila virilis (Fruit fly).